The sequence spans 120 residues: uncharacterized protein (120 aa).

The helical transmembrane segment at 63 to 83 (IDMSCVICFNFSCHLFVVIFI) threads the bilayer.

It is found in the membrane. This is an uncharacterized protein from Saccharomyces cerevisiae (strain ATCC 204508 / S288c) (Baker's yeast).